A 1218-amino-acid chain; its full sequence is Coatomer subunit alpha-2 (1218 aa).

WD repeat units lie at residues 7–48 (TKSN…DRFD), 49–88 (EHDG…CLFT), 91–132 (GHLD…AVLT), 133–172 (GHNH…KKSV), 202–241 (GHDR…AWEV), 246–285 (GHMN…GIQT), 288–326 (REHD…PAFS), and 363–404 (SLNQ…AGRA). Residues 855 to 876 (MANGGDGFDAEEGEANEEDGEE) form a disordered region. Residues 862–876 (FDAEEGEANEEDGEE) show a composition bias toward acidic residues.

Oligomeric complex that consists of at least the alpha, beta, beta', gamma, delta, epsilon and zeta subunits.

It is found in the cytoplasm. It localises to the golgi apparatus membrane. The protein localises to the cytoplasmic vesicle. The protein resides in the COPI-coated vesicle membrane. The coatomer is a cytosolic protein complex that binds to dilysine motifs and reversibly associates with Golgi non-clathrin-coated vesicles, which further mediate biosynthetic protein transport from the ER, via the Golgi up to the trans Golgi network. Coatomer complex is required for budding from Golgi membranes, and is essential for the retrograde Golgi-to-ER transport of dilysine-tagged proteins. This Oryza sativa subsp. japonica (Rice) protein is Coatomer subunit alpha-2.